The following is a 166-amino-acid chain: Flagellar assembly factor FliW (166 aa).

The protein belongs to the FliW family. Interacts with translational regulator CsrA and flagellin(s).

Its subcellular location is the cytoplasm. Functionally, acts as an anti-CsrA protein, binds CsrA and prevents it from repressing translation of its target genes, one of which is flagellin. Binds to flagellin and participates in the assembly of the flagellum. The protein is Flagellar assembly factor FliW of Desulfovibrio desulfuricans (strain ATCC 27774 / DSM 6949 / MB).